The primary structure comprises 120 residues: Ribonuclease P protein component 4 (120 aa).

Zn(2+) contacts are provided by cysteine 68, cysteine 71, cysteine 97, and cysteine 100.

This sequence belongs to the eukaryotic/archaeal RNase P protein component 4 family. In terms of assembly, consists of a catalytic RNA component and at least 5 protein subunits. Forms a heterodimeric subcomplex with Rnp1. Reconstituted enzyme missing individual protein subunits is suboptimally active, showing each subunit contributes to optimization of activity. The cofactor is Zn(2+).

The protein localises to the cytoplasm. The catalysed reaction is Endonucleolytic cleavage of RNA, removing 5'-extranucleotides from tRNA precursor.. Functionally, part of ribonuclease P, a protein complex that generates mature tRNA molecules by cleaving their 5'-ends. Binds RNase P RNA. This chain is Ribonuclease P protein component 4, found in Pyrococcus horikoshii (strain ATCC 700860 / DSM 12428 / JCM 9974 / NBRC 100139 / OT-3).